The sequence spans 436 residues: Sulfopropanediol 3-dehydrogenase (436 aa).

3 residues coordinate NAD(+): Tyr-118, Gln-180, and Asn-203. 2 residues coordinate Zn(2+): Gln-248 and His-251. Catalysis depends on proton acceptor residues Glu-318 and His-319. Zn(2+) is bound by residues Asp-352 and His-411.

Belongs to the histidinol dehydrogenase family. HpsN subfamily. Requires Zn(2+) as cofactor.

It catalyses the reaction (2R)-3-sulfopropanediol + 2 NAD(+) + H2O = (2R)-3-sulfolactate + 2 NADH + 3 H(+). Functionally, catalyzes the NAD-dependent oxidation of (R)-2,3-dihydroxypropane-1-sulfonate to (R)-3-sulfolactate. This chain is Sulfopropanediol 3-dehydrogenase, found in Cupriavidus pinatubonensis (strain JMP 134 / LMG 1197) (Cupriavidus necator (strain JMP 134)).